A 206-amino-acid polypeptide reads, in one-letter code: Ras-related protein Ral-A (206 aa).

Residues 24 to 29 (GVGKSA), 40 to 46 (VEDYEPT), and 127 to 130 (NKSD) each bind GTP. The short motif at 43–51 (YEPTKADSY) is the Effector region element. Thr46 is a glycosylation site ((Microbial infection) O-linked (Glc) threonine; by P.sordellii toxin TcsL). The residue at position 194 (Ser194) is a Phosphoserine; by AURKA. Cysteine methyl ester is present on Cys203. A lipid anchor (S-geranylgeranyl cysteine) is attached at Cys203. The propeptide at 204-206 (CIL) is removed in mature form.

The protein belongs to the small GTPase superfamily. Ras family. As to quaternary structure, interacts (via effector domain) with RALBP1; during mitosis, recruits RALBP1 to the mitochondrion where it promotes DNM1L phosphorylation and mitochondrial fission. Interacts with EXOC2/Sec5 and EXOC8/Exo84; binding to EXOC2 and EXOC8 is mutually exclusive. Interacts with Clostridium exoenzyme C3. Interacts with RALGPS1. Interacts with LPAR1 and LPAR2. Interacts with GRK2 in response to LPAR1 activation. RALA and GRK2 binding to LPAR1 is mutually exclusive. Interacts with CDC42. In terms of processing, phosphorylated. Phosphorylation at Ser-194 by AURKA/Aurora kinase A, during mitosis, induces RALA localization to the mitochondrion where it regulates mitochondrial fission. Post-translationally, prenylation is essential for membrane localization. The geranylgeranylated form and the farnesylated mutant do not undergo alternative prenylation in response to geranylgeranyltransferase I inhibitors (GGTIs) and farnesyltransferase I inhibitors (FTIs). (Microbial infection) Glucosylated at Thr-46 by P.sordellii toxin TcsL from strain 6018. Monoglucosylation completely prevents the recognition of the downstream effector, blocking the GTPases in their inactive form. Not glucosylated by TcsL from strain VPI 9048.

It is found in the cell membrane. The protein resides in the cleavage furrow. Its subcellular location is the midbody. It localises to the midbody ring. The protein localises to the mitochondrion. It carries out the reaction GTP + H2O = GDP + phosphate + H(+). With respect to regulation, alternates between an inactive form bound to GDP and an active form bound to GTP. Activated by a guanine nucleotide-exchange factor (GEF) and inactivated by a GTPase-activating protein (GAP). Its function is as follows. Multifunctional GTPase involved in a variety of cellular processes including gene expression, cell migration, cell proliferation, oncogenic transformation and membrane trafficking. Accomplishes its multiple functions by interacting with distinct downstream effectors. Acts as a GTP sensor for GTP-dependent exocytosis of dense core vesicles. The RALA-exocyst complex regulates integrin-dependent membrane raft exocytosis and growth signaling. Key regulator of LPAR1 signaling and competes with GRK2 for binding to LPAR1 thus affecting the signaling properties of the receptor. Required for anchorage-independent proliferation of transformed cells. During mitosis, supports the stabilization and elongation of the intracellular bridge between dividing cells. Cooperates with EXOC2 to recruit other components of the exocyst to the early midbody. During mitosis, also controls mitochondrial fission by recruiting to the mitochondrion RALBP1, which mediates the phosphorylation and activation of DNM1L by the mitotic kinase cyclin B-CDK1. The chain is Ras-related protein Ral-A (RALA) from Homo sapiens (Human).